We begin with the raw amino-acid sequence, 387 residues long: EARP and GARP complex-interacting protein 1 (387 aa).

The residue at position 1 (Met1) is an N-acetylmethionine. 6 WD repeats span residues 4 to 48, 55 to 101, 124 to 164, 172 to 214, 219 to 258, and 263 to 302; these read DAPV…IIDF, INKN…VWRM, ELLC…LWDL, VLAS…GWDT, QIYC…FWDT, and EPVK…LSNM. The tract at residues 310-335 is disordered; the sequence is FGHLVDDDDISDQEDHRSEEKSKEPL. At Ser320 the chain carries Phosphoserine. Positions 322–335 are enriched in basic and acidic residues; that stretch reads QEDHRSEEKSKEPL. The WD 7 repeat unit spans residues 338–379; it reads NVIATYEEHEDSVYAVDWSSADPWLFASLSYDGRLVINRVPR.

The protein belongs to the WD repeat EIPR1 family. In terms of assembly, interacts with two multisubunit tethering complexes: EARP composed of VPS50, VPS51, VPS52 and VPS53 subunits and GARP complex composed of VPS51, VPS52, VPS53 and VPS54 subunits. Interacts with SNAP29.

The protein localises to the golgi apparatus. Its subcellular location is the trans-Golgi network. Acts as a component of endosomal retrieval machinery that is involved in protein transport from early endosomes to either recycling endosomes or the trans-Golgi network. Mediates the recruitment of Golgi-associated retrograde protein (GARP) complex to the trans-Golgi network and controls early endosome-to-Golgi transport of internalized protein. Promotes the recycling of internalized transferrin receptor (TFRC) to the plasma membrane through interaction with endosome-associated recycling protein (EARP) complex. Controls proper insulin distribution and secretion, and retention of cargo in mature dense core vesicles. Required for the stability of the endosome-associated retrograde protein (EARP) complex subunits and for proper localization and association of EARP with membranes. In Homo sapiens (Human), this protein is EARP and GARP complex-interacting protein 1.